Reading from the N-terminus, the 313-residue chain is Porphobilinogen deaminase (313 aa).

Residue Cys241 is modified to S-(dipyrrolylmethanemethyl)cysteine.

The protein belongs to the HMBS family. Monomer. Dipyrromethane serves as cofactor.

It carries out the reaction 4 porphobilinogen + H2O = hydroxymethylbilane + 4 NH4(+). Its pathway is porphyrin-containing compound metabolism; protoporphyrin-IX biosynthesis; coproporphyrinogen-III from 5-aminolevulinate: step 2/4. The protein operates within porphyrin-containing compound metabolism; chlorophyll biosynthesis. In terms of biological role, tetrapolymerization of the monopyrrole PBG into the hydroxymethylbilane pre-uroporphyrinogen in several discrete steps. In Chlorobium chlorochromatii (strain CaD3), this protein is Porphobilinogen deaminase.